A 1049-amino-acid polypeptide reads, in one-letter code: Multidrug efflux pump subunit AcrB (1049 aa).

Topologically, residues 1-9 (MPNFFIDRP) are cytoplasmic. The chain crosses the membrane as a helical span at residues 10 to 28 (IFAWVIAIIIMLAGGLAIL). At 29 to 336 (KLPVAQYPTI…YDTTPFVKIS (308 aa)) the chain is on the periplasmic side. Residues 337–356 (IHEVVKTLVEAIILVFLVMY) form a helical membrane-spanning segment. Residues 357 to 365 (LFLQNFRAT) are Cytoplasmic-facing. The helical transmembrane segment at 366–385 (LIPTIAVPVVLLGTFAVLAA) threads the bilayer. Residues 386 to 391 (FGFSIN) are Periplasmic-facing. The chain crosses the membrane as a helical span at residues 392 to 413 (TLTMFGMVLAIGLLVDDAIVVV). The Cytoplasmic portion of the chain corresponds to 414-438 (ENVERVMAEEGLPPKEATRKSMGQI). The chain crosses the membrane as a helical span at residues 439–457 (QGALVGIAMVLSAVFVPMA). The Periplasmic portion of the chain corresponds to 458–465 (FFGGSTGA). A helical membrane pass occupies residues 466 to 490 (IYRQFSITIVSAMALSVLVALILTP). The Cytoplasmic segment spans residues 491–538 (ALCATMLKPIAKGDHGEGKKGFFGWFNRMFEKSTHHYTDSVGGILRST). The chain crosses the membrane as a helical span at residues 539–555 (GRYLVLYLIIVVGMAYL). Residues 556–871 (FVRLPSSFLP…MSYQERLSGN (316 aa)) lie on the Periplasmic side of the membrane. The chain crosses the membrane as a helical span at residues 872 to 888 (QAPSLYAISLIVVFLCL). Over 889-898 (AALYESWSIP) the chain is Cytoplasmic. A helical transmembrane segment spans residues 899-918 (FSVMLVVPLGVIGALLAATF). The Periplasmic segment spans residues 919–924 (RGLTND). Residues 925-943 (VYFQVGLLTTIGLSAKNAI) form a helical membrane-spanning segment. Residues 944 to 972 (LIVEFAKDLMDKEGKGLIEATLDAVRMRL) are Cytoplasmic-facing. The chain crosses the membrane as a helical span at residues 973-992 (RPILMTSLAFILGVMPLVIS). Residues 993-998 (TGAGSG) are Periplasmic-facing. Residues 999–1018 (AQNAVGTGVMGGMVTATVLA) form a helical membrane-spanning segment. At 1019-1049 (IFFVPVFFVVVRRRFSRKNEDIEHSHTVDHH) the chain is on the cytoplasmic side.

It belongs to the resistance-nodulation-cell division (RND) (TC 2.A.6) family. As to quaternary structure, homotrimer, with large domains that extend into the periplasm, interacts with AcrA and TolC. AcrA may be required to stably link this protein and TolC. Interacts with AcrZ. Part of the AcrA-AcrB-AcrZ-TolC efflux pump.

The protein localises to the cell inner membrane. Functionally, acrA-AcrB-AcrZ-TolC is a drug efflux protein complex with broad substrate specificity that uses the proton motive force to export substrates. In terms of biological role, (Microbial infection) Involved in contact-dependent growth inhibition (CDI), acts downstream of BamA, the receptor for CDI. Its role in CDI is independent of the AcrA-AcrB-TolC efflux pump complex. In Escherichia coli (strain K12), this protein is Multidrug efflux pump subunit AcrB (acrB).